Consider the following 180-residue polypeptide: Large ribosomal subunit protein uL5 (180 aa).

This sequence belongs to the universal ribosomal protein uL5 family. Part of the 50S ribosomal subunit; part of the 5S rRNA/L5/L18/L25 subcomplex. Contacts the 5S rRNA and the P site tRNA. Forms a bridge to the 30S subunit in the 70S ribosome.

In terms of biological role, this is one of the proteins that bind and probably mediate the attachment of the 5S RNA into the large ribosomal subunit, where it forms part of the central protuberance. In the 70S ribosome it contacts protein S13 of the 30S subunit (bridge B1b), connecting the 2 subunits; this bridge is implicated in subunit movement. Contacts the P site tRNA; the 5S rRNA and some of its associated proteins might help stabilize positioning of ribosome-bound tRNAs. The sequence is that of Large ribosomal subunit protein uL5 from Chlamydia pneumoniae (Chlamydophila pneumoniae).